The primary structure comprises 1178 residues: DNA-directed RNA polymerase subunit beta (1178 aa).

Positions 1-37 (MLEGCILADSRQSKTAASPSPSRPQSSSNNSVPGAPN) are disordered. A compositionally biased stretch (low complexity) spans 18 to 33 (SPSPSRPQSSSNNSVP).

Belongs to the RNA polymerase beta chain family. As to quaternary structure, the RNAP catalytic core consists of 2 alpha, 1 beta, 1 beta' and 1 omega subunit. When a sigma factor is associated with the core the holoenzyme is formed, which can initiate transcription.

The catalysed reaction is RNA(n) + a ribonucleoside 5'-triphosphate = RNA(n+1) + diphosphate. DNA-dependent RNA polymerase catalyzes the transcription of DNA into RNA using the four ribonucleoside triphosphates as substrates. In Mycobacterium tuberculosis (strain CDC 1551 / Oshkosh), this protein is DNA-directed RNA polymerase subunit beta.